The sequence spans 194 residues: MLNVRDVLRAYLHGYFPMGDPDDGNVYWCRPRRRAVFPLDTYRASRVVRRLVRDNVFDIQINRDFNAVIAHCAKPRRHESETWISDEIVAVYLELHSLGLAHSVECYADGELAGGLYGIALGGAFFGESMFFRQPNASKVAFDALVRQLKLQRFDLLDAQIMNPHLEFLGAVEIDHEEYMRQLAMALEKKISFL.

It belongs to the L/F-transferase family.

Its subcellular location is the cytoplasm. The enzyme catalyses N-terminal L-lysyl-[protein] + L-leucyl-tRNA(Leu) = N-terminal L-leucyl-L-lysyl-[protein] + tRNA(Leu) + H(+). The catalysed reaction is N-terminal L-arginyl-[protein] + L-leucyl-tRNA(Leu) = N-terminal L-leucyl-L-arginyl-[protein] + tRNA(Leu) + H(+). It carries out the reaction L-phenylalanyl-tRNA(Phe) + an N-terminal L-alpha-aminoacyl-[protein] = an N-terminal L-phenylalanyl-L-alpha-aminoacyl-[protein] + tRNA(Phe). Functions in the N-end rule pathway of protein degradation where it conjugates Leu, Phe and, less efficiently, Met from aminoacyl-tRNAs to the N-termini of proteins containing an N-terminal arginine or lysine. The chain is Leucyl/phenylalanyl-tRNA--protein transferase from Prosthecochloris aestuarii (strain DSM 271 / SK 413).